The sequence spans 170 residues: Probable inactive uracil-DNA glycosylase, mitochondrial (170 aa).

The N-terminal 53 residues, Met1–Val53, are a transit peptide targeting the mitochondrion.

Belongs to the uracil-DNA glycosylase (UDG) superfamily. UNG family.

Its subcellular location is the mitochondrion. In terms of biological role, probable inactive paralog of AtUNG (AC Q9LIH6) generated by a gene duplication event and subsequently disrupted by at least two transposon insertions. This Arabidopsis thaliana (Mouse-ear cress) protein is Probable inactive uracil-DNA glycosylase, mitochondrial.